The primary structure comprises 87 residues: Exendin-4 (87 aa).

Residues 1–23 (MKIILWLCVFGLFLATLFPISWQ) form the signal peptide. Positions 24–45 (MPVESGLSSEDSASSESFASKI) are excised as a propeptide. S86 bears the Serine amide mark.

The protein belongs to the glucagon family. In terms of tissue distribution, expressed by the venom gland.

It is found in the secreted. In terms of biological role, venom protein that mimics the incretin hormone glucagon-like peptide 1 (GLP-1). It stimulates insulin synthesis and secretion, protects against beta-cell apoptosis in response to different insults, and promotes beta-cell proliferation It also promotes satiety, reduces food intake, reduces fat deposition, reduces body weight and inhibits gastric emptying. Interacts with GLP-1 receptor (GLP1R). Induces hypotension that is mediated by relaxation of cardiac smooth muscle. The chain is Exendin-4 from Heloderma suspectum cinctum (Banded Gila monster).